The sequence spans 845 residues: Protein kintoun (845 aa).

The segment covering 362–382 has biased composition (basic and acidic residues); the sequence is SKEQAQMHETLRHFSREDSGV. 3 disordered regions span residues 362–420, 575–691, and 773–845; these read SKEQ…PVRH, QALK…SMSD, and AQHR…EMDD. Serine 380 is subject to Phosphoserine. The span at 391 to 400 shows a compositional bias: acidic residues; the sequence is PVEEDPDGEL. Basic and acidic residues predominate over residues 584-593; sequence GTKEEEKENQ. Positions 611 to 622 are enriched in basic residues; sequence KPGKKQRKRNKK. Positions 640-671 are enriched in polar residues; the sequence is LTKNSELQPKSTFNLPQRKQRSYSECNDSTGG. Residue serine 779 is modified to Phosphoserine. Positions 794–804 are enriched in polar residues; it reads LKQQENQSRNC.

Belongs to the PIH1 family. Kintoun subfamily. Interacts with Pp1alpha-96A, Pp1-87B, Pp1-13C and flw.

It localises to the cytoplasm. Required for cytoplasmic pre-assembly of axonemal dyneins, thereby playing a central role in motility in cilia and flagella. Involved in pre-assembly of dynein arm complexes in the cytoplasm before intraflagellar transport loads them for the ciliary compartment. The polypeptide is Protein kintoun (Drosophila erecta (Fruit fly)).